The sequence spans 790 residues: Vacuolar protein sorting-associated protein 35C (790 aa).

Position 1 is an N-acetylmethionine (Met1).

This sequence belongs to the VPS35 family. In terms of assembly, component of the retromer complex which consists of VPS29 (MAG1), VPS26 (VPS26A or VPS26B), VPS35 (VPS35A or VPS35B or VPS35C), VPS5/17 (SNX1 or SNX2A or SNX2B). Component of a retromer subcomplex consisting of VPS29 (MAG1), VPS26 (VPS26A or VPS26B), VPS35 (VPS35A or VPS35B or VPS35C).

The protein localises to the cytoplasm. Its subcellular location is the endosome membrane. It localises to the prevacuolar compartment membrane. The protein resides in the golgi apparatus. It is found in the trans-Golgi network membrane. Plays a role in vesicular protein sorting. Component of the membrane-associated retromer complex which is essential in endosome-to-Golgi retrograde transport. Also involved in the efficient sorting of seed storage proteins. The VPS29-VPS26-VPS35 subcomplex may be involved in recycling of specific cargos from endosome to the plasma membrane. The chain is Vacuolar protein sorting-associated protein 35C (VPS35C) from Arabidopsis thaliana (Mouse-ear cress).